Consider the following 138-residue polypeptide: Putative pre-16S rRNA nuclease (138 aa).

Belongs to the YqgF nuclease family.

The protein resides in the cytoplasm. Could be a nuclease involved in processing of the 5'-end of pre-16S rRNA. This is Putative pre-16S rRNA nuclease from Listeria monocytogenes serotype 4b (strain CLIP80459).